A 309-amino-acid chain; its full sequence is Glutaminase (309 aa).

Substrate contacts are provided by Ser-64, Asn-114, Glu-160, Asn-167, Tyr-191, Tyr-243, and Val-261.

This sequence belongs to the glutaminase family. As to quaternary structure, homotetramer.

The enzyme catalyses L-glutamine + H2O = L-glutamate + NH4(+). The polypeptide is Glutaminase (Agrobacterium fabrum (strain C58 / ATCC 33970) (Agrobacterium tumefaciens (strain C58))).